The primary structure comprises 1178 residues: DNA-directed RNA polymerase I subunit 2 (1178 aa).

A C4-type zinc finger spans residues 1097–1137 (CSLCGSLLTSSVVNVQQKKLIQEIGKLPPGRTPKKVTCYSC).

It belongs to the RNA polymerase beta chain family. As to quaternary structure, component of the RNA polymerase I (Pol I) complex consisting of at least 13 subunits.

The protein resides in the nucleus. The catalysed reaction is RNA(n) + a ribonucleoside 5'-triphosphate = RNA(n+1) + diphosphate. DNA-dependent RNA polymerase catalyzes the transcription of DNA into RNA using the four ribonucleoside triphosphates as substrates. Second largest core component of RNA polymerase I which synthesizes ribosomal RNA precursors. Proposed to contribute to the polymerase catalytic activity and forms the polymerase active center together with the largest subunit. Pol I is composed of mobile elements and NRPA2 is part of the core element with the central large cleft and probably a clamp element that moves to open and close the cleft. In terms of biological role, essential for the completion of the three rounds of mitosis in female megaspores required for the development of mature gametophytes. The protein is DNA-directed RNA polymerase I subunit 2 of Arabidopsis thaliana (Mouse-ear cress).